The primary structure comprises 331 residues: Lipoyl synthase (331 aa).

The interval 1–33 (MSDALIATSSEAPQSPAEQYDPTRKQKSADKTA) is disordered. A compositionally biased stretch (polar residues) spans 7–17 (ATSSEAPQSPA). The span at 21 to 33 (DPTRKQKSADKTA) shows a compositional bias: basic and acidic residues. Residues cysteine 78, cysteine 83, cysteine 89, cysteine 104, cysteine 108, cysteine 111, and serine 318 each coordinate [4Fe-4S] cluster. Positions 89 to 307 (CFGKGTATFM…EEEAYKMGFT (219 aa)) constitute a Radical SAM core domain.

This sequence belongs to the radical SAM superfamily. Lipoyl synthase family. It depends on [4Fe-4S] cluster as a cofactor.

The protein localises to the cytoplasm. It carries out the reaction [[Fe-S] cluster scaffold protein carrying a second [4Fe-4S](2+) cluster] + N(6)-octanoyl-L-lysyl-[protein] + 2 oxidized [2Fe-2S]-[ferredoxin] + 2 S-adenosyl-L-methionine + 4 H(+) = [[Fe-S] cluster scaffold protein] + N(6)-[(R)-dihydrolipoyl]-L-lysyl-[protein] + 4 Fe(3+) + 2 hydrogen sulfide + 2 5'-deoxyadenosine + 2 L-methionine + 2 reduced [2Fe-2S]-[ferredoxin]. Its pathway is protein modification; protein lipoylation via endogenous pathway; protein N(6)-(lipoyl)lysine from octanoyl-[acyl-carrier-protein]: step 2/2. Its function is as follows. Catalyzes the radical-mediated insertion of two sulfur atoms into the C-6 and C-8 positions of the octanoyl moiety bound to the lipoyl domains of lipoate-dependent enzymes, thereby converting the octanoylated domains into lipoylated derivatives. The polypeptide is Lipoyl synthase (Cupriavidus necator (strain ATCC 17699 / DSM 428 / KCTC 22496 / NCIMB 10442 / H16 / Stanier 337) (Ralstonia eutropha)).